We begin with the raw amino-acid sequence, 182 residues long: Flightin (182 aa).

Residues 1–15 (MADEEDPWGFDDGGE) show a composition bias toward acidic residues. Positions 1–76 (MADEEDPWGF…PPPPEDDGYR (76 aa)) are disordered.

In terms of processing, several forms of flightin are thought to be produced through post-translational modifications, possibly by phosphorylation. As to expression, found only in indirect flight muscles (IFM).

In terms of biological role, possibly involved in the regulation of flight muscles contraction, possibly by modulating actin-myosin interaction. In Drosophila melanogaster (Fruit fly), this protein is Flightin (fln).